The primary structure comprises 297 residues: MNGKLQSSDVKNETPYNIPLLINENVISSGISLISLWHTYADEHYRVIWPRDKKKPLIANSWVAVYTVQGCGKILLKNGEQITLHGNCIIFLKPMDIHSYHCEGLVWEQYWMEFTPTSMMDIPVGQQSVIYNGEIYNQELTEVAELITSPEAIKNNLAVAFLTKIIYQWICLMYADGKKDPQRRQIEKLIATLHASLQQRWSVADMAATIPCSEAWLRRLFLRYTGKTPKEYYLDARLDLALSLLKQQGNSVGEVADTLNFFDSFHFSKAFKHKFGYAPSAVLKNTDQHPTDASPHN.

The 99-residue stretch at 187–285 (EKLIATLHAS…GYAPSAVLKN (99 aa)) folds into the HTH araC/xylS-type domain. 2 DNA-binding regions (H-T-H motif) span residues 204 to 225 (ADMA…LRYT) and 252 to 275 (VGEV…KHKF).

This is an uncharacterized protein from Escherichia coli (strain K12).